A 649-amino-acid chain; its full sequence is 1-deoxy-D-xylulose-5-phosphate synthase (649 aa).

Residues H84 and 125-127 (GHS) each bind thiamine diphosphate. Residue D156 participates in Mg(2+) binding. Thiamine diphosphate is bound by residues 157–158 (GS), N185, F292, and E385. N185 contributes to the Mg(2+) binding site.

Belongs to the transketolase family. DXPS subfamily. Homodimer. Requires Mg(2+) as cofactor. The cofactor is thiamine diphosphate.

It catalyses the reaction D-glyceraldehyde 3-phosphate + pyruvate + H(+) = 1-deoxy-D-xylulose 5-phosphate + CO2. Its pathway is metabolic intermediate biosynthesis; 1-deoxy-D-xylulose 5-phosphate biosynthesis; 1-deoxy-D-xylulose 5-phosphate from D-glyceraldehyde 3-phosphate and pyruvate: step 1/1. In terms of biological role, catalyzes the acyloin condensation reaction between C atoms 2 and 3 of pyruvate and glyceraldehyde 3-phosphate to yield 1-deoxy-D-xylulose-5-phosphate (DXP). This Saccharophagus degradans (strain 2-40 / ATCC 43961 / DSM 17024) protein is 1-deoxy-D-xylulose-5-phosphate synthase.